We begin with the raw amino-acid sequence, 120 residues long: MERYRLPKTAFVRKGWEYDAVYRGGRRLHGVGFTIIYLLNSTENNRLGISVHRKLRGAVKRNRIKRIIRECFRLHRDIFPQKADIVFAVRPGFALSSPEQIRQAVGSLCGTPCGVCNEKA.

This sequence belongs to the RnpA family. As to quaternary structure, consists of a catalytic RNA component (M1 or rnpB) and a protein subunit.

It catalyses the reaction Endonucleolytic cleavage of RNA, removing 5'-extranucleotides from tRNA precursor.. In terms of biological role, RNaseP catalyzes the removal of the 5'-leader sequence from pre-tRNA to produce the mature 5'-terminus. It can also cleave other RNA substrates such as 4.5S RNA. The protein component plays an auxiliary but essential role in vivo by binding to the 5'-leader sequence and broadening the substrate specificity of the ribozyme. The polypeptide is Ribonuclease P protein component (Desulfotalea psychrophila (strain LSv54 / DSM 12343)).